We begin with the raw amino-acid sequence, 101 residues long: Iron-sulfur cluster assembly protein CyaY (101 aa).

Belongs to the frataxin family.

Its function is as follows. Involved in iron-sulfur (Fe-S) cluster assembly. May act as a regulator of Fe-S biogenesis. The sequence is that of Iron-sulfur cluster assembly protein CyaY from Actinobacillus pleuropneumoniae serotype 7 (strain AP76).